The primary structure comprises 294 residues: Protein RarD (294 aa).

Over 1–11 the chain is Cytoplasmic; it reads MDAKQTRQGVL. Residues 12 to 34 form a helical membrane-spanning segment; that stretch reads LALAAYFIWGIAPAYFKLIYYVP. The region spanning 18–145 is the EamA domain; that stretch reads FIWGIAPAYF…AVCGVLVQLW (128 aa). Over 35-37 the chain is Periplasmic; that stretch reads ADE. A helical transmembrane segment spans residues 38–60; sequence ILTHRVIWSFFFMVALLSVSRQW. Topologically, residues 61-72 are cytoplasmic; it reads RQVKRLLKTPKK. A helical transmembrane segment spans residues 73–95; sequence IFLLALSAVLVGGNWLLFIWAVN. Residues 96 to 99 are Periplasmic-facing; sequence NHHM. The chain crosses the membrane as a helical span at residues 100–122; the sequence is LEASLGYFINPLVNILLGMIFLG. Residues 123–128 are Cytoplasmic-facing; that stretch reads ERFRRM. A helical transmembrane segment spans residues 129 to 146; sequence QWLAVILAVCGVLVQLWT. Residues 147–149 are Periplasmic-facing; it reads FGS. A helical transmembrane segment spans residues 150 to 167; the sequence is LPIIALGLAFSFAFYGLV. Topologically, residues 168-179 are cytoplasmic; that stretch reads RKKIAVEAQTGM. Residues 180 to 197 traverse the membrane as a helical segment; the sequence is LVETLWLLPVAAIYLFSI. Over 198 to 211 the chain is Periplasmic; that stretch reads ADSATSHMGQNALS. The helical transmembrane segment at 212–234 threads the bilayer; it reads LNLLLMAAGVVTTIPLLCFTGAA. Topologically, residues 235–238 are cytoplasmic; sequence TRLR. Residues 239-261 traverse the membrane as a helical segment; that stretch reads LSTLGFFQYIGPTLMFLLAVTFY. The Periplasmic portion of the chain corresponds to 262–270; the sequence is GEVPGADKM. Residues 271 to 290 form a helical membrane-spanning segment; sequence VTFAFIWVALAIFVMDAIYT. Residues 291-294 lie on the Cytoplasmic side of the membrane; the sequence is QRKK.

The protein belongs to the EamA transporter family.

It is found in the cell inner membrane. This is Protein RarD (rarD) from Salmonella typhi.